Consider the following 196-residue polypeptide: Protein Flattop (196 aa).

Residues 107 to 196 (NGLRPEIFGK…PHAGRNLAEV (90 aa)) are disordered. Positions 113–124 (IFGKPHDPDSQK) are enriched in basic and acidic residues. Residues 137-149 (APSPTIIPSSPAS) show a composition bias toward low complexity. Residues 150–162 (NLSSPDQLQSSHP) are compositionally biased toward polar residues.

It belongs to the Flattop family. In terms of assembly, microtubule inner protein component of sperm flagellar doublet microtubules. Interacts with DLG3. In terms of tissue distribution, expressed in trachea multiciliated cells.

The protein resides in the cytoplasm. Its subcellular location is the cytoskeleton. It is found in the cilium basal body. The protein localises to the cell projection. It localises to the cilium. The protein resides in the apical cell membrane. Its subcellular location is the cilium axoneme. It is found in the flagellum axoneme. In terms of biological role, microtubule inner protein (MIP) part of the dynein-decorated doublet microtubules (DMTs) in cilia axoneme. Acts as a regulator of cilium basal body docking and positioning in mono- and multiciliated cells. Regulates basal body docking and cilia formation in multiciliated lung cells. Regulates kinocilium positioning and stereocilia bundle morphogenesis in the inner ear. This is Protein Flattop from Bos taurus (Bovine).